The following is a 311-amino-acid chain: 5'-adenylylsulfate reductase-like 3 (311 aa).

The signal sequence occupies residues 1–22; sequence MATRLLCWTALLLPIIAATAAA. One can recognise a Thioredoxin domain in the interval 23–164; sequence SPLPEACPVP…LAAFYRDVSG (142 aa). A glycan (N-linked (GlcNAc...) asparagine) is linked at N139. The chain crosses the membrane as a helical span at residues 210–230; sequence LALATAFVILRLLYLLFPKIG. N-linked (GlcNAc...) asparagine glycans are attached at residues N281 and N305.

The protein resides in the membrane. The protein is 5'-adenylylsulfate reductase-like 3 (APRL3) of Oryza sativa subsp. japonica (Rice).